A 601-amino-acid polypeptide reads, in one-letter code: Elongation factor 4 (601 aa).

The tr-type G domain occupies 7-189 (DRIRNFSIIA…ALVTRLPAPK (183 aa)). GTP contacts are provided by residues 19-24 (DHGKST) and 136-139 (NKVD).

The protein belongs to the TRAFAC class translation factor GTPase superfamily. Classic translation factor GTPase family. LepA subfamily.

The protein localises to the cell inner membrane. It catalyses the reaction GTP + H2O = GDP + phosphate + H(+). In terms of biological role, required for accurate and efficient protein synthesis under certain stress conditions. May act as a fidelity factor of the translation reaction, by catalyzing a one-codon backward translocation of tRNAs on improperly translocated ribosomes. Back-translocation proceeds from a post-translocation (POST) complex to a pre-translocation (PRE) complex, thus giving elongation factor G a second chance to translocate the tRNAs correctly. Binds to ribosomes in a GTP-dependent manner. In Granulibacter bethesdensis (strain ATCC BAA-1260 / CGDNIH1), this protein is Elongation factor 4.